The sequence spans 746 residues: GTPase-activating protein GYP7 (746 aa).

Serine 265 and serine 339 each carry phosphoserine. The Rab-GAP TBC domain maps to 385–633 (LENDSLRGKV…HIWENFWTFY (249 aa)). The interval 470–505 (TIDGLPPPPQQLPANENNSTSPESANDESDDADDGV) is disordered. Positions 481–491 (LPANENNSTSP) are enriched in polar residues.

The protein localises to the cytoplasm. In terms of biological role, GTPase-activating protein (GAP) that most effectively accelerates the intrinsic GTPase activity of Ypt/Rab-type GTPase YPT7 involved in vacuole docking and fusion. It is also active, but to a lesser extent, on YPT31, YPT32, YPT1, YPT6 and SEC4. Provides a catalytic arginine (arginine finger) in trans to accelerate the GTP hydrolysis rate of the substrate GTPase. The polypeptide is GTPase-activating protein GYP7 (GYP7) (Saccharomyces cerevisiae (strain ATCC 204508 / S288c) (Baker's yeast)).